The following is a 309-amino-acid chain: Protein FdhE homolog (309 aa).

The protein belongs to the FdhE family.

The protein resides in the cytoplasm. In terms of biological role, necessary for formate dehydrogenase activity. In Pasteurella multocida (strain Pm70), this protein is Protein FdhE homolog.